The following is a 320-amino-acid chain: Cytochrome f (320 aa).

An N-terminal signal peptide occupies residues 1 to 35 (MQMRNTFSWIKEEIIRFIAVSLIIYIITRAPISNA). Residues Y36, C56, C59, and H60 each coordinate heme. The chain crosses the membrane as a helical span at residues 286 to 306 (VQGLLLFLASIILAQIFLVLK).

It belongs to the cytochrome f family. In terms of assembly, the 4 large subunits of the cytochrome b6-f complex are cytochrome b6, subunit IV (17 kDa polypeptide, petD), cytochrome f and the Rieske protein, while the 4 small subunits are PetG, PetL, PetM and PetN. The complex functions as a dimer. The cofactor is heme.

It is found in the plastid. It localises to the chloroplast thylakoid membrane. Functionally, component of the cytochrome b6-f complex, which mediates electron transfer between photosystem II (PSII) and photosystem I (PSI), cyclic electron flow around PSI, and state transitions. This Morus indica (Mulberry) protein is Cytochrome f.